A 335-amino-acid polypeptide reads, in one-letter code: Probable peroxidase 26 (335 aa).

An N-terminal signal peptide occupies residues 1–18; the sequence is MVMIHIFLTVMVVGGVSL. 4 disulfides stabilise this stretch: Cys46-Cys122, Cys79-Cys84, Cys128-Cys331, and Cys205-Cys237. Arg73 is an active-site residue. The Ca(2+) site is built by Asp78, Val81, Gly83, Asp85, and Ser87. Pro168 is a binding site for substrate. His198 is a binding site for heme b. Residue Ser199 coordinates Ca(2+). N-linked (GlcNAc...) asparagine glycosylation occurs at Asn216. Ca(2+) is bound by residues Asp255 and Ser258. 2 N-linked (GlcNAc...) asparagine glycosylation sites follow: Asn259 and Asn273.

The protein belongs to the peroxidase family. Classical plant (class III) peroxidase subfamily. Heme b is required as a cofactor. Requires Ca(2+) as cofactor.

Its subcellular location is the secreted. The enzyme catalyses 2 a phenolic donor + H2O2 = 2 a phenolic radical donor + 2 H2O. Removal of H(2)O(2), oxidation of toxic reductants, biosynthesis and degradation of lignin, suberization, auxin catabolism, response to environmental stresses such as wounding, pathogen attack and oxidative stress. The enzyme activity has to be proved. In Arabidopsis thaliana (Mouse-ear cress), this protein is Probable peroxidase 26 (PER26).